The chain runs to 249 residues: Proteasome subunit alpha type-3 (249 aa).

Belongs to the peptidase T1A family. In terms of assembly, the 26S proteasome consists of a 20S proteasome core and two 19S regulatory subunits. The 20S proteasome core is composed of 28 subunits that are arranged in four stacked rings, resulting in a barrel-shaped structure. The two end rings are each formed by seven alpha subunits, and the two central rings are each formed by seven beta subunits. The catalytic chamber with the active sites is on the inside of the barrel.

It is found in the cytoplasm. Its subcellular location is the nucleus. The proteasome is a multicatalytic proteinase complex which is characterized by its ability to cleave peptides with Arg, Phe, Tyr, Leu, and Glu adjacent to the leaving group at neutral or slightly basic pH. The proteasome has an ATP-dependent proteolytic activity. The polypeptide is Proteasome subunit alpha type-3 (PAG1) (Spinacia oleracea (Spinach)).